Reading from the N-terminus, the 491-residue chain is Keratin, type I cytoskeletal 24 (491 aa).

The disordered stretch occupies residues 1–23 (MFCSAQKGSCSSRVSSSGAVGSR). A head region spans residues 1–117 (MFCSAQKGSC…GYDGGLLSGS (117 aa)). Over residues 8 to 23 (GSCSSRVSSSGAVGSR) the composition is skewed to low complexity. A coil 1A region spans residues 118–153 (EKQTMQGLNDRLANYLDKVRALEEANTDLETKIKDW). Residues 118–432 (EKQTMQGLND…RLLNGDGGGC (315 aa)) form the IF rod domain. A linker 1 region spans residues 154–174 (YGRHGSGKDGPGRDYSQYCSV). Positions 175-266 (IEDLKNQIIS…KNHEEEMKCL (92 aa)) are coil 1B. The linker 12 stretch occupies residues 267 to 289 (QGSSGGDVTVEMNATPGTDLTKL). A coil 2 region spans residues 290–428 (LNDMRAQYEA…ETYRRLLNGD (139 aa)). The tract at residues 429–491 (GGGCDYRNLV…VSNISEVKIK (63 aa)) is tail.

This sequence belongs to the intermediate filament family. As to quaternary structure, heterotetramer of two type I and two type II keratins.

This is Keratin, type I cytoskeletal 24 (Krt24) from Rattus norvegicus (Rat).